We begin with the raw amino-acid sequence, 412 residues long: 1-deoxy-D-xylulose 5-phosphate reductoisomerase (412 aa).

Thr5, Gly6, Ser7, Ile8, Gly31, Arg32, Asn33, and Asn125 together coordinate NADPH. Position 126 (Lys126) interacts with 1-deoxy-D-xylulose 5-phosphate. Residue Glu127 coordinates NADPH. Asp151 is a Mn(2+) binding site. 1-deoxy-D-xylulose 5-phosphate is bound by residues Ser152, Glu153, Ser189, and His212. Mn(2+) is bound at residue Glu153. Residue Gly218 coordinates NADPH. 1-deoxy-D-xylulose 5-phosphate-binding residues include Ser225, Asn230, Lys231, and Glu234. Residue Glu234 coordinates Mn(2+).

Belongs to the DXR family. Mg(2+) serves as cofactor. The cofactor is Mn(2+).

The catalysed reaction is 2-C-methyl-D-erythritol 4-phosphate + NADP(+) = 1-deoxy-D-xylulose 5-phosphate + NADPH + H(+). It participates in isoprenoid biosynthesis; isopentenyl diphosphate biosynthesis via DXP pathway; isopentenyl diphosphate from 1-deoxy-D-xylulose 5-phosphate: step 1/6. Catalyzes the NADPH-dependent rearrangement and reduction of 1-deoxy-D-xylulose-5-phosphate (DXP) to 2-C-methyl-D-erythritol 4-phosphate (MEP). The chain is 1-deoxy-D-xylulose 5-phosphate reductoisomerase from Prochlorococcus marinus (strain SARG / CCMP1375 / SS120).